A 328-amino-acid polypeptide reads, in one-letter code: 4-hydroxy-3-methylbut-2-enyl diphosphate reductase (328 aa).

[4Fe-4S] cluster is bound at residue C13. H41 and H75 together coordinate (2E)-4-hydroxy-3-methylbut-2-enyl diphosphate. Dimethylallyl diphosphate is bound by residues H41 and H75. Residues H41 and H75 each coordinate isopentenyl diphosphate. C97 serves as a coordination point for [4Fe-4S] cluster. Position 125 (H125) interacts with (2E)-4-hydroxy-3-methylbut-2-enyl diphosphate. H125 lines the dimethylallyl diphosphate pocket. H125 provides a ligand contact to isopentenyl diphosphate. Catalysis depends on E127, which acts as the Proton donor. Residue T168 coordinates (2E)-4-hydroxy-3-methylbut-2-enyl diphosphate. C229 is a [4Fe-4S] cluster binding site. Residues S257, S258, N259, and S306 each coordinate (2E)-4-hydroxy-3-methylbut-2-enyl diphosphate. S257, S258, N259, and S306 together coordinate dimethylallyl diphosphate. S257, S258, N259, and S306 together coordinate isopentenyl diphosphate.

It belongs to the IspH family. [4Fe-4S] cluster serves as cofactor.

It carries out the reaction isopentenyl diphosphate + 2 oxidized [2Fe-2S]-[ferredoxin] + H2O = (2E)-4-hydroxy-3-methylbut-2-enyl diphosphate + 2 reduced [2Fe-2S]-[ferredoxin] + 2 H(+). The enzyme catalyses dimethylallyl diphosphate + 2 oxidized [2Fe-2S]-[ferredoxin] + H2O = (2E)-4-hydroxy-3-methylbut-2-enyl diphosphate + 2 reduced [2Fe-2S]-[ferredoxin] + 2 H(+). The protein operates within isoprenoid biosynthesis; dimethylallyl diphosphate biosynthesis; dimethylallyl diphosphate from (2E)-4-hydroxy-3-methylbutenyl diphosphate: step 1/1. It participates in isoprenoid biosynthesis; isopentenyl diphosphate biosynthesis via DXP pathway; isopentenyl diphosphate from 1-deoxy-D-xylulose 5-phosphate: step 6/6. Its function is as follows. Catalyzes the conversion of 1-hydroxy-2-methyl-2-(E)-butenyl 4-diphosphate (HMBPP) into a mixture of isopentenyl diphosphate (IPP) and dimethylallyl diphosphate (DMAPP). Acts in the terminal step of the DOXP/MEP pathway for isoprenoid precursor biosynthesis. The sequence is that of 4-hydroxy-3-methylbut-2-enyl diphosphate reductase from Chlorobium phaeobacteroides (strain DSM 266 / SMG 266 / 2430).